A 21-amino-acid polypeptide reads, in one-letter code: Agglutinin beta-1 chain (21 aa).

The segment covering 1 to 10 (NGPNGKSQSI) has biased composition (polar residues). Residues 1–21 (NGPNGKSQSIIVGPWGDRVTN) are disordered.

The protein belongs to the jacalin lectin family. As to quaternary structure, formed of four alpha chains and four beta chains.

Its function is as follows. D-galactose-specific lectin, binds the T-antigen structure Gal-beta1,3-GalNAc. This is Agglutinin beta-1 chain from Maclura pomifera (Osage orange).